A 98-amino-acid chain; its full sequence is NADH-ubiquinone oxidoreductase chain 4L (98 aa).

A run of 3 helical transmembrane segments spans residues 1 to 21 (MTMVYANIFLAFITSLMGLLM), 29 to 49 (SLLCLEGMMLSLFVMMTVTIL), and 61 to 81 (IILLVFAACEAALGLSLLVMV).

This sequence belongs to the complex I subunit 4L family. In terms of assembly, core subunit of respiratory chain NADH dehydrogenase (Complex I) which is composed of 45 different subunits.

Its subcellular location is the mitochondrion inner membrane. It carries out the reaction a ubiquinone + NADH + 5 H(+)(in) = a ubiquinol + NAD(+) + 4 H(+)(out). In terms of biological role, core subunit of the mitochondrial membrane respiratory chain NADH dehydrogenase (Complex I) which catalyzes electron transfer from NADH through the respiratory chain, using ubiquinone as an electron acceptor. Part of the enzyme membrane arm which is embedded in the lipid bilayer and involved in proton translocation. The polypeptide is NADH-ubiquinone oxidoreductase chain 4L (MT-ND4L) (Leptonychotes weddellii (Weddell seal)).